The primary structure comprises 735 residues: MHCGLLEEPDMDSTESWIERCLNESENKRYSSHTSLGNVSNDENEEKENNRASKPHSTPATLQWLEENYEIAEGVCIPRSALYMHYLDFCEKNDTQPVNAASFGKIIRQQFPQLTTRRLGTRGQSKYHYYGIAVKESSQYYDVMYSKKGAAWVSETGKREVTKQTVAYSPRSKLGTLLPDFPNVKDLNLPASLPEEKVSTFIMMYRTHCQRILDTVIRANFDEVQSFLLHFWQGMPPHMLPVLGSSTVVNIVGVCDSILYKAISGVLMPTVLQALPDSLTQVIRKFAKQLDEWLKVALHDLPENLRNIKFELSRRFSQILRRQTSLNHLCQASRTVIHSADITFQMLEDWRNVDLSSITKQTLYTMEDSRDEHRRLIIQLYQEFDHLLEEQSPIESYIEWLDTMVDRCVVKVAAKRQGSLKKVAQQFLLMWSCFGTRVIRDMTLHSAPSFGSFHLIHLMFDDYVLYLLESLHCQERANELMRAMKGEGSTAEAQEEIILTEATPPTPSPGPSFSPAKSATSVEVPPPSSPVSNPSPEYTGLSTAGAMQSYTWSLTYTVTTAAGSPAENSQQLPCMRSTHMPSSSVTHRIPVYSHREEHGYTGSYNYGSYGNQHPHPLQNQYPALPHDTAISGPLHYSPYHRSSAQYPFNSPTSRMEPCLMSSTPRLHPTPVTPRWPEVPTANACYTSPSVHSTRYGNSSDMYTPLTTRRNSEYEHMQHFPGFAYINGEASTGWAK.

The interval 27–59 (NKRYSSHTSLGNVSNDENEEKENNRASKPHSTP) is disordered. Positions 32-41 (SHTSLGNVSN) are enriched in polar residues. Residues 44 to 126 (NEEKENNRAS…RRLGTRGQSK (83 aa)) mediate DNA binding. The RFX-type winged-helix DNA-binding region spans 61–136 (TLQWLEENYE…YHYYGIAVKE (76 aa)). The segment at 315–487 (RFSQILRRQT…NELMRAMKGE (173 aa)) is necessary for dimerization. The segment at 501-538 (EATPPTPSPGPSFSPAKSATSVEVPPPSSPVSNPSPEY) is disordered.

This sequence belongs to the RFX family. Homodimer. Heterodimer with RFX2 and RFX3. Binds DNA. Interacts with GPS2. In terms of tissue distribution, isoform 1: Brain-specific. Isoform 2: Testis-specific. Isoform 1: Highly expressed in the suprachiasmatic nucleus, the central pacemaker site of the circadian clock (at protein level).

The protein resides in the nucleus. Its function is as follows. Transcription factor that plays a role in early brain development. May activate transcription by interacting directly with the X-box. May activate transcription from CX3CL1 promoter through the X-box during brain development. May be required for neural tube ciliogenesis during embryogenesis. The sequence is that of Transcription factor RFX4 (Rfx4) from Mus musculus (Mouse).